We begin with the raw amino-acid sequence, 956 residues long: Calsyntenin-3 (956 aa).

The first 19 residues, 1–19 (MTLLLLPLLLASLLASCSC), serve as a signal peptide directing secretion. Residues 1 to 30 (MTLLLLPLLLASLLASCSCNKANKHKPWIE) are Cytoplasmic-facing. Residues 20–847 (NKANKHKPWI…SHRNSMIPSA (828 aa)) lie on the Extracellular side of the membrane. 2 Cadherin domains span residues 29–145 (IEAE…APVF) and 146–246 (VERL…KPSW). The helical intramembrane region spans 31–51 (AEYQGIVMENDNTVLLNPPLF). Residues 52 to 71 (ALDKDAPLRYAGEICGFRLH) are Cytoplasmic-facing. Positions 72 to 94 (GSGVPFEAVILDKATGEGLIRAK) form an intramembrane region, helical. The Cytoplasmic portion of the chain corresponds to 95 to 151 (EPVDCEAQKEHTFTIQAYDCGEGPDGANTKKSHKATVHVRVNDVNEFAPVFVERLYR). Residues 152-172 (AAVTEGKLYDRILRVEAIDGD) constitute an intramembrane region (helical). Topologically, residues 173–255 (CSPQYSQICY…WQGWNKRIEY (83 aa)) are cytoplasmic. The helical transmembrane segment at 256–276 (APGAGSLALFPGIRLETCDEP) threads the bilayer. At 277–364 (LWNIQATIEL…PLGGPSGLGS (88 aa)) the chain is on the lumenal side. N299, N327, N347, N507, and N740 each carry an N-linked (GlcNAc...) asparagine glycan. Residues 848 to 868 (ATLIIVVCVGFLVLMVVLGLV) traverse the membrane as a helical segment. The Cytoplasmic segment spans residues 869–956 (RIHSLHRRVS…RIIETPPHRY (88 aa)). Residues 916 to 956 (QSCVTGAVGGQQEDEDSSDSEVADSPSSDERRIIETPPHRY) are disordered. The span at 927–937 (QEDEDSSDSEV) shows a compositional bias: acidic residues. Basic and acidic residues predominate over residues 943-956 (SDERRIIETPPHRY).

Belongs to the calsyntenin family. In terms of assembly, interacts (via cadherin domains) with both alpha and beta isoforms of neurexins (NRXN1, NRXN2 and NRXN3). Directly interacts with APBA2. Forms a tripartite complex with APBA2 and APP. Interacts with low affinity with KLC1. Interacts with SLC23A2/SVCT2. As to quaternary structure, interacts with CIDEA; inhibiting the lipid transferase activity of CIDEA. Interacts with CIDEC; inhibiting the lipid transferase activity of CIDEC. In terms of processing, proteolytically processed under normal cellular conditions. A primary zeta-cleavage generates a large extracellular (soluble) N-terminal domain (sAlc) and a short C-terminal transmembrane fragment (CTF1). A secondary cleavage catalyzed by gamma-secretase within the transmembrane domain releases the beta-Alc-beta chain in the extracellular milieu and produces an intracellular fragment (AlcICD). This processing is strongly suppressed in the tripartite complex formed with APBA2 and APP, which seems to prevent the association with gamma-secretase. Ubiquitinated: endoplasmic reticulum-localized protein is ubiquitinated and degraded by the endoplasmic reticulum-associated degradation (ERAD) pathway. According to PubMed:12498782, expressed predominantly in the brain and in kidney. Low levels in heart, skeletal muscle, liver, placenta, pancreas and lung. According to PubMed:12972431, predominant expression in brain, and only marginal in kidney. In brain, present throughout all cortical layers, highest levels in GABAergic neurons (based on morphology and distribution pattern). In terms of tissue distribution, expression is restricted to adipose tissue, with high expression in multilocular thermogenic adipocytes (brown adipose tissue).

It is found in the postsynaptic cell membrane. The protein resides in the endoplasmic reticulum membrane. The protein localises to the golgi apparatus membrane. Its subcellular location is the cell projection. It localises to the dendrite. It is found in the lipid droplet. Postsynaptic adhesion molecule that binds to presynaptic neurexins to mediate both excitatory and inhibitory synapse formation. Promotes synapse development by acting as a cell adhesion molecule at the postsynaptic membrane, which associates with both neurexin-alpha and neurexin-beta proteins at the presynaptic membrane. Regulates the balance between excitatory and inhibitory synapses by inhibiting formation of excitatory parallel-fiber synapses and promoting formation of inhibitory synapses in the same neuron. May also be involved in ascorbate (vitamin C) uptake via its interaction with SLC23A2/SVCT2. Complex formation with APBA2 and APP, stabilizes APP metabolism and enhances APBA2-mediated suppression of beta-APP40 secretion, due to the retardation of intracellular APP maturation. In terms of biological role, adipose-specific isoform that plays a key role in adaptive thermogenesis. Facilitates the efficient use of stored triglyceride by promoting multilocular morphology of thermogenic adipocytes: acts by inhibiting the activity of CIDEA and CIDEC on lipid droplets, thereby preventing lipid droplet fusion and facilitating lipid utilization. May also participate in adaptive thermogenesis by promoting sympathetic innervation of thermogenic adipose tissue: acts by driving secretion of neurotrophic factor S100B from brown adipocytes, stimulating neurite outgrowth from sympathetic neurons. This chain is Calsyntenin-3, found in Homo sapiens (Human).